A 185-amino-acid polypeptide reads, in one-letter code: Peptidyl-tRNA hydrolase (185 aa).

A tRNA-binding site is contributed by Tyr-14. The Proton acceptor role is filled by His-19. Phe-64, Asn-66, and Asn-112 together coordinate tRNA.

This sequence belongs to the PTH family. As to quaternary structure, monomer.

It localises to the cytoplasm. It carries out the reaction an N-acyl-L-alpha-aminoacyl-tRNA + H2O = an N-acyl-L-amino acid + a tRNA + H(+). Functionally, hydrolyzes ribosome-free peptidyl-tRNAs (with 1 or more amino acids incorporated), which drop off the ribosome during protein synthesis, or as a result of ribosome stalling. Catalyzes the release of premature peptidyl moieties from peptidyl-tRNA molecules trapped in stalled 50S ribosomal subunits, and thus maintains levels of free tRNAs and 50S ribosomes. The protein is Peptidyl-tRNA hydrolase of Levilactobacillus brevis (strain ATCC 367 / BCRC 12310 / CIP 105137 / JCM 1170 / LMG 11437 / NCIMB 947 / NCTC 947) (Lactobacillus brevis).